Consider the following 86-residue polypeptide: Large ribosomal subunit protein bL27 (86 aa).

The disordered stretch occupies residues 1–26; the sequence is MATKKAGGSSRNGRDSAGRRLGVKKS.

It belongs to the bacterial ribosomal protein bL27 family.

This is Large ribosomal subunit protein bL27 from Rickettsia prowazekii (strain Madrid E).